The primary structure comprises 296 residues: MSTRLISGSAVALVTPFRQDCSVDTVALRQLVRFHIAAGTDIIIPCGTTGESPTLSMEEQSRIIRTVKEEAGEQIMVAAGAGTNATDHAVELAKNAEKAGASAILSVAPYYNKPSQEGIYQHYARIAEAVSVPIIIYNVPGRTGSNVAASTILRLARDFGNIAAVKEASDNMAQITELLEERPENFSVLTGEDMLILPFMAMGGDGVISVAANQVPSAVKRLVEAARTGRLDEARAINTRYRRLFRLNFIESNPVPVKYALALMGMIEEVYRLPLVPLADENKRILKEELQSLGLV.

Residue threonine 49 coordinates pyruvate. The Proton donor/acceptor role is filled by tyrosine 137. Residue lysine 166 is the Schiff-base intermediate with substrate of the active site. Pyruvate is bound at residue isoleucine 208.

The protein belongs to the DapA family. As to quaternary structure, homotetramer; dimer of dimers.

It localises to the cytoplasm. The enzyme catalyses L-aspartate 4-semialdehyde + pyruvate = (2S,4S)-4-hydroxy-2,3,4,5-tetrahydrodipicolinate + H2O + H(+). Its pathway is amino-acid biosynthesis; L-lysine biosynthesis via DAP pathway; (S)-tetrahydrodipicolinate from L-aspartate: step 3/4. Catalyzes the condensation of (S)-aspartate-beta-semialdehyde [(S)-ASA] and pyruvate to 4-hydroxy-tetrahydrodipicolinate (HTPA). This is 4-hydroxy-tetrahydrodipicolinate synthase from Chlorobium limicola (strain DSM 245 / NBRC 103803 / 6330).